The chain runs to 129 residues: DNA-directed RNA polymerase subunit omega (129 aa).

The interval 76–100 is disordered; the sequence is EVDEPEPEAVPMIASGDSSGGEDSD.

The protein belongs to the RNA polymerase subunit omega family. In terms of assembly, the RNAP catalytic core consists of 2 alpha, 1 beta, 1 beta' and 1 omega subunit. When a sigma factor is associated with the core the holoenzyme is formed, which can initiate transcription.

It carries out the reaction RNA(n) + a ribonucleoside 5'-triphosphate = RNA(n+1) + diphosphate. In terms of biological role, promotes RNA polymerase assembly. Latches the N- and C-terminal regions of the beta' subunit thereby facilitating its interaction with the beta and alpha subunits. This is DNA-directed RNA polymerase subunit omega from Xanthobacter autotrophicus (strain ATCC BAA-1158 / Py2).